A 258-amino-acid chain; its full sequence is Enterotoxin type G (258 aa).

Positions 1–25 are cleaved as a signal peptide; the sequence is MKKLSTVIIILILEIVFHNMNYVNA. Cysteines 116 and 133 form a disulfide.

This sequence belongs to the staphylococcal/streptococcal toxin family.

The protein localises to the secreted. In terms of biological role, staphylococcal enterotoxins cause the intoxication staphylococcal food poisoning syndrome. The illness is characterized by high fever, hypotension, diarrhea, shock, and in some cases death. The sequence is that of Enterotoxin type G (entG) from Staphylococcus aureus (strain N315).